A 144-amino-acid polypeptide reads, in one-letter code: Large ribosomal subunit protein uL16 (144 aa).

It belongs to the universal ribosomal protein uL16 family. As to quaternary structure, part of the 50S ribosomal subunit.

Binds 23S rRNA and is also seen to make contacts with the A and possibly P site tRNAs. This is Large ribosomal subunit protein uL16 from Thermoanaerobacter pseudethanolicus (strain ATCC 33223 / 39E) (Clostridium thermohydrosulfuricum).